A 492-amino-acid chain; its full sequence is Catalase isozyme 2 (492 aa).

Active-site residues include His65 and Asn138. Tyr348 contributes to the heme binding site.

It belongs to the catalase family. As to quaternary structure, homotetramer. It depends on heme as a cofactor.

The protein resides in the peroxisome. The enzyme catalyses 2 H2O2 = O2 + 2 H2O. In terms of biological role, occurs in almost all aerobically respiring organisms and serves to protect cells from the toxic effects of hydrogen peroxide. The sequence is that of Catalase isozyme 2 (CAT2) from Solanum lycopersicum (Tomato).